A 219-amino-acid polypeptide reads, in one-letter code: AA11 family lytic polysaccharide monooxygenase A (219 aa).

A signal peptide spans 1–18 (MMLSKVVMGLLTASLAAA). Residue His-19 coordinates Cu(+). Intrachain disulfides connect Cys-58/Cys-154, Cys-94/Cys-116, and Cys-185/Cys-218. Asn-80 carries N-linked (GlcNAc...) asparagine glycosylation. His-89 serves as a coordination point for Cu(+).

The protein belongs to the polysaccharide monooxygenase AA11 family. Requires Cu(2+) as cofactor.

In terms of biological role, lytic polysaccharide monooxygenase (LPMO) that depolymerizes chitin via the oxidation of scissile beta-(1-4)-glycosidic bonds, yielding C1 or C4 oxidation products. Catalysis by LPMOs requires the reduction of the active-site copper from Cu(II) to Cu(I) by a reducing agent and H(2)O(2) or O(2) as a cosubstrate. Has considerable affinity for alpha-chitin and, more so, beta-chitin. Active toward both alpha-chitin and beta-chitin allomorphs and enhances chitin degradation by an endoacting chitinase, in particular for alpha-chitin, and so plays a role in fungal chitin turnover. The catalytic activity increases when supplying reactions with hydrogen peroxide, confirming that it has peroxygenase activity. Does not show activity on phosphoric acid-swollen cellulose (PASC), Avicel, tamarind xyloglucan, birchwood xylan, beechwood xylan, acetyl glucuronoxylan from aspen, ivory nut mannan, acetylated konjac glucomannan, potato starch, heparin, hyaluronic acid, and chitosan. The polypeptide is AA11 family lytic polysaccharide monooxygenase A (Aspergillus fumigatus (strain CBS 144.89 / FGSC A1163 / CEA10) (Neosartorya fumigata)).